Consider the following 159-residue polypeptide: Phosphopantetheine adenylyltransferase (159 aa).

Ser9 contributes to the substrate binding site. ATP is bound by residues 9-10 (SF) and His17. 3 residues coordinate substrate: Lys41, Leu73, and Arg87. ATP contacts are provided by residues 88–90 (GLR), Glu98, and 123–129 (YSYVSSS).

The protein belongs to the bacterial CoaD family. In terms of assembly, homohexamer. Requires Mg(2+) as cofactor.

It is found in the cytoplasm. It carries out the reaction (R)-4'-phosphopantetheine + ATP + H(+) = 3'-dephospho-CoA + diphosphate. Its pathway is cofactor biosynthesis; coenzyme A biosynthesis; CoA from (R)-pantothenate: step 4/5. Its function is as follows. Reversibly transfers an adenylyl group from ATP to 4'-phosphopantetheine, yielding dephospho-CoA (dPCoA) and pyrophosphate. This Shouchella clausii (strain KSM-K16) (Alkalihalobacillus clausii) protein is Phosphopantetheine adenylyltransferase.